We begin with the raw amino-acid sequence, 39 residues long: Photosystem II reaction center protein J (39 aa).

The chain crosses the membrane as a helical span at residues 7–27; sequence IPLWVVAVIAGLGVIAVVGLF.

It belongs to the PsbJ family. PSII is composed of 1 copy each of membrane proteins PsbA, PsbB, PsbC, PsbD, PsbE, PsbF, PsbH, PsbI, PsbJ, PsbK, PsbL, PsbM, PsbT, PsbX, PsbY, PsbZ, Psb30/Ycf12, peripheral proteins PsbO, CyanoQ (PsbQ), PsbU, PsbV and a large number of cofactors. It forms dimeric complexes.

The protein localises to the cellular thylakoid membrane. Its function is as follows. One of the components of the core complex of photosystem II (PSII). PSII is a light-driven water:plastoquinone oxidoreductase that uses light energy to abstract electrons from H(2)O, generating O(2) and a proton gradient subsequently used for ATP formation. It consists of a core antenna complex that captures photons, and an electron transfer chain that converts photonic excitation into a charge separation. The sequence is that of Photosystem II reaction center protein J from Gloeothece citriformis (strain PCC 7424) (Cyanothece sp. (strain PCC 7424)).